A 537-amino-acid polypeptide reads, in one-letter code: Chaperonin GroEL (537 aa).

Residues 29 to 32 (TLGP), 86 to 90 (DGTTT), G413, 477 to 479 (NAA), and D493 contribute to the ATP site.

It belongs to the chaperonin (HSP60) family. Forms a cylinder of 14 subunits composed of two heptameric rings stacked back-to-back. Interacts with the co-chaperonin GroES.

Its subcellular location is the cytoplasm. The catalysed reaction is ATP + H2O + a folded polypeptide = ADP + phosphate + an unfolded polypeptide.. Functionally, together with its co-chaperonin GroES, plays an essential role in assisting protein folding. The GroEL-GroES system forms a nano-cage that allows encapsulation of the non-native substrate proteins and provides a physical environment optimized to promote and accelerate protein folding. The chain is Chaperonin GroEL from Bifidobacterium animalis subsp. lactis (strain AD011).